Here is a 183-residue protein sequence, read N- to C-terminus: V-type ATP synthase subunit E (183 aa).

The protein belongs to the V-ATPase E subunit family.

Functionally, produces ATP from ADP in the presence of a proton gradient across the membrane. The sequence is that of V-type ATP synthase subunit E from Fusobacterium nucleatum subsp. nucleatum (strain ATCC 25586 / DSM 15643 / BCRC 10681 / CIP 101130 / JCM 8532 / KCTC 2640 / LMG 13131 / VPI 4355).